A 1077-amino-acid chain; its full sequence is Response regulator SSK1 (1077 aa).

The 147-residue stretch at 854 to 1000 folds into the Response regulatory domain; sequence NVLIVEDNII…FLERKVMEWG (147 aa). A 4-aspartylphosphate modification is found at Asp903.

Belongs to the SSK1 family.

It is found in the cytoplasm. Its function is as follows. Two-domain response regulator protein in the two-component signal transduction system of the HOG1 pathway. Involved in multi-stress responses and is essential for conidiation, secondary metabolism, autophagy and endocyrosis. In addition, regulates mycelial growth, cell nucleus development, septum formation, and organelle development. Also regulates trap formation and thus plays a crucial role in pathogenicity. In Arthrobotrys oligospora (strain ATCC 24927 / CBS 115.81 / DSM 1491) (Nematode-trapping fungus), this protein is Response regulator SSK1.